The chain runs to 428 residues: 4-hydroxy-3-methylbut-2-en-1-yl diphosphate synthase (flavodoxin) (428 aa).

Residues cysteine 315, cysteine 318, cysteine 361, and glutamate 368 each coordinate [4Fe-4S] cluster.

This sequence belongs to the IspG family. Requires [4Fe-4S] cluster as cofactor.

The catalysed reaction is (2E)-4-hydroxy-3-methylbut-2-enyl diphosphate + oxidized [flavodoxin] + H2O + 2 H(+) = 2-C-methyl-D-erythritol 2,4-cyclic diphosphate + reduced [flavodoxin]. The protein operates within isoprenoid biosynthesis; isopentenyl diphosphate biosynthesis via DXP pathway; isopentenyl diphosphate from 1-deoxy-D-xylulose 5-phosphate: step 5/6. Functionally, converts 2C-methyl-D-erythritol 2,4-cyclodiphosphate (ME-2,4cPP) into 1-hydroxy-2-methyl-2-(E)-butenyl 4-diphosphate. This chain is 4-hydroxy-3-methylbut-2-en-1-yl diphosphate synthase (flavodoxin), found in Ralstonia pickettii (strain 12J).